We begin with the raw amino-acid sequence, 438 residues long: GDP-mannose 6-dehydrogenase (438 aa).

Residues Tyr-10, Val-11, Asp-30, Lys-35, Thr-86, and Thr-124 each contribute to the NAD(+) site. The GDP-alpha-D-mannuronate site is built by Glu-161, Lys-210, Asn-214, His-217, Asn-225, Tyr-256, Tyr-257, Arg-259, Phe-262, and Gly-265. Cys-268 is an active-site residue. Lys-271 serves as a coordination point for NAD(+). Lys-324 contacts GDP-alpha-D-mannuronate. Position 331 (Arg-331) interacts with NAD(+).

This sequence belongs to the UDP-glucose/GDP-mannose dehydrogenase family.

It carries out the reaction GDP-alpha-D-mannose + 2 NAD(+) + H2O = GDP-alpha-D-mannuronate + 2 NADH + 3 H(+). It participates in glycan biosynthesis; alginate biosynthesis. In terms of biological role, catalyzes the oxidation of guanosine diphospho-D-mannose (GDP-D-mannose) to GDP-D-mannuronic acid, a precursor for alginate polymerization. The alginate layer causes a mucoid phenotype and provides a protective barrier against host immune defenses and antibiotics. This Pseudomonas savastanoi pv. phaseolicola (Pseudomonas syringae pv. phaseolicola) protein is GDP-mannose 6-dehydrogenase (algD).